Consider the following 709-residue polypeptide: ATP-binding cassette sub-family F member 3 (709 aa).

The residue at position 2 (alanine 2) is an N-acetylalanine. Basic and acidic residues predominate over residues 129–143 (RLKAKQEKRSEKETL). The interval 129–171 (RLKAKQEKRSEKETLKTSSPLVLEEASASQAGSRKESRLESSG) is disordered. Serine 155, serine 157, and serine 161 each carry phosphoserine. Positions 161 to 171 (SRKESRLESSG) are enriched in basic and acidic residues. ABC transporter domains are found at residues 178 to 424 (VRIE…LNQQ) and 492 to 707 (LQLD…RREG). 210 to 217 (GRNGLGKT) is an ATP binding site. Serine 283 is subject to Phosphoserine. 525-532 (GENGAGKS) lines the ATP pocket.

This sequence belongs to the ABC transporter superfamily. ABCF family. EF3 subfamily.

Displays an antiviral effect against flaviviruses such as west Nile virus (WNV) in the presence of OAS1B. The protein is ATP-binding cassette sub-family F member 3 (Abcf3) of Rattus norvegicus (Rat).